We begin with the raw amino-acid sequence, 281 residues long: Putative integrase/recombinase y4rD (281 aa).

The 94-residue stretch at 5–98 (LLLAPLLESY…AIRSFFHHVA (94 aa)) folds into the Core-binding (CB) domain. The region spanning 122–281 (EVTHHLTKAE…TMSGTENASV (160 aa)) is the Tyr recombinase domain. Residues arginine 162, lysine 188, histidine 262, and arginine 265 contribute to the active site.

The protein belongs to the 'phage' integrase family.

Functionally, seems to be non-functional. The protein is Putative integrase/recombinase y4rD of Sinorhizobium fredii (strain NBRC 101917 / NGR234).